Reading from the N-terminus, the 231-residue chain is 2,3-bisphosphoglycerate-dependent phosphoglycerate mutase (231 aa).

Substrate is bound by residues 10–17 (RHGQSEWN), 23–24 (TG), arginine 62, 89–92 (ERHY), lysine 100, 116–117 (RR), and 185–186 (GN). Histidine 11 (tele-phosphohistidine intermediate) is an active-site residue. Glutamate 89 (proton donor/acceptor) is an active-site residue.

Belongs to the phosphoglycerate mutase family. BPG-dependent PGAM subfamily. In terms of assembly, homodimer.

It carries out the reaction (2R)-2-phosphoglycerate = (2R)-3-phosphoglycerate. It participates in carbohydrate degradation; glycolysis; pyruvate from D-glyceraldehyde 3-phosphate: step 3/5. Its function is as follows. Catalyzes the interconversion of 2-phosphoglycerate and 3-phosphoglycerate. This Buchnera aphidicola subsp. Acyrthosiphon pisum (strain APS) (Acyrthosiphon pisum symbiotic bacterium) protein is 2,3-bisphosphoglycerate-dependent phosphoglycerate mutase.